The following is a 114-amino-acid chain: rRNA-processing protein cgrA (114 aa).

Low complexity predominate over residues 1 to 13 (MSSAAPAPSTHAA). Disordered regions lie at residues 1-47 (MSSA…AARK) and 77-114 (RRAA…LLNS). A coiled-coil region spans residues 40 to 101 (TKRAAARKEQ…EKMHRKRVER (62 aa)). Positions 77–93 (RRAAKEEKERYEKMAEK) are enriched in basic and acidic residues. Residues 94-114 (MHRKRVERLKKREKRNKLLNS) are compositionally biased toward basic residues.

It belongs to the CGR1 family.

The protein resides in the nucleus. The protein localises to the nucleolus. Involved in nucleolar integrity and required for processing of the pre-rRNA for the 60S ribosome subunit. The chain is rRNA-processing protein cgrA (cgrA) from Emericella nidulans (strain FGSC A4 / ATCC 38163 / CBS 112.46 / NRRL 194 / M139) (Aspergillus nidulans).